The following is a 556-amino-acid chain: Oxygen-dependent choline dehydrogenase (556 aa).

FAD is bound at residue 6–35 (DYIIIGAGSAGNVLAARLTEDPGVSVLLLE). The Proton acceptor role is filled by histidine 475.

The protein belongs to the GMC oxidoreductase family. It depends on FAD as a cofactor.

It carries out the reaction choline + A = betaine aldehyde + AH2. The catalysed reaction is betaine aldehyde + NAD(+) + H2O = glycine betaine + NADH + 2 H(+). Its pathway is amine and polyamine biosynthesis; betaine biosynthesis via choline pathway; betaine aldehyde from choline (cytochrome c reductase route): step 1/1. Functionally, involved in the biosynthesis of the osmoprotectant glycine betaine. Catalyzes the oxidation of choline to betaine aldehyde and betaine aldehyde to glycine betaine at the same rate. In Xanthomonas campestris pv. campestris (strain 8004), this protein is Oxygen-dependent choline dehydrogenase.